The sequence spans 520 residues: Probable cytosol aminopeptidase (520 aa).

Lys-232 and Asp-237 together coordinate Mn(2+). Lys-244 is a catalytic residue. The Mn(2+) site is built by Asp-255, Asp-314, and Glu-316. Arg-318 is an active-site residue. A disordered region spans residues 488–520 (KAKKSTAKKATTKKTTTRKTASKTKSTKSKARK).

It belongs to the peptidase M17 family. Requires Mn(2+) as cofactor.

Its subcellular location is the cytoplasm. It carries out the reaction Release of an N-terminal amino acid, Xaa-|-Yaa-, in which Xaa is preferably Leu, but may be other amino acids including Pro although not Arg or Lys, and Yaa may be Pro. Amino acid amides and methyl esters are also readily hydrolyzed, but rates on arylamides are exceedingly low.. The catalysed reaction is Release of an N-terminal amino acid, preferentially leucine, but not glutamic or aspartic acids.. Functionally, presumably involved in the processing and regular turnover of intracellular proteins. Catalyzes the removal of unsubstituted N-terminal amino acids from various peptides. The polypeptide is Probable cytosol aminopeptidase (pepA) (Metamycoplasma salivarium (Mycoplasma salivarium)).